The following is a 195-amino-acid chain: Small ribosomal subunit protein uS4c (195 aa).

Positions 82 to 143 (MRLDNILFRL…KQRSKALIQN (62 aa)) constitute an S4 RNA-binding domain.

It belongs to the universal ribosomal protein uS4 family. As to quaternary structure, part of the 30S ribosomal subunit. Contacts protein S5. The interaction surface between S4 and S5 is involved in control of translational fidelity.

The protein resides in the plastid. It is found in the chloroplast. Its function is as follows. One of the primary rRNA binding proteins, it binds directly to 16S rRNA where it nucleates assembly of the body of the 30S subunit. In terms of biological role, with S5 and S12 plays an important role in translational accuracy. This Gladiolus murielae (Abyssinian gladiolus) protein is Small ribosomal subunit protein uS4c (rps4).